Here is a 208-residue protein sequence, read N- to C-terminus: Small ribosomal subunit protein eS8 (208 aa).

Residues 1 to 33 (MGISRDHWHKRRATGGKRKPIRKKRKFELGRPA) form a disordered region. The segment covering 7-26 (HWHKRRATGGKRKPIRKKRK) has biased composition (basic residues).

This sequence belongs to the eukaryotic ribosomal protein eS8 family.

This is Small ribosomal subunit protein eS8 (RpS8) from Apis mellifera (Honeybee).